Consider the following 100-residue polypeptide: Urease subunit gamma (100 aa).

Belongs to the urease gamma subunit family. In terms of assembly, heterotrimer of UreA (gamma), UreB (beta) and UreC (alpha) subunits. Three heterotrimers associate to form the active enzyme.

The protein localises to the cytoplasm. The catalysed reaction is urea + 2 H2O + H(+) = hydrogencarbonate + 2 NH4(+). It functions in the pathway nitrogen metabolism; urea degradation; CO(2) and NH(3) from urea (urease route): step 1/1. This Haemophilus influenzae (strain PittGG) protein is Urease subunit gamma.